A 222-amino-acid chain; its full sequence is MIRRINLSGNPNLGVYISVTDSVALIPQNTPEKFEGVLREALEVEVLKVSISGSSLNGALAVGNSNGFVVSNQAMDREIDALAAAGVEAVRIPERFTAVGNLVLANDNGAVASPLLSDDALQVIGDVLEVDVKVSTLAGLNIVGSMGAATNRGALLNPQASSEEIGIIEDTLGVEADVGTVNHGVTLIGACSVANSNGVLVGEETTGPELARIEEALGFLEG.

It belongs to the eIF-6 family.

Binds to the 50S ribosomal subunit and prevents its association with the 30S ribosomal subunit to form the 70S initiation complex. This Methanothermobacter thermautotrophicus (strain ATCC 29096 / DSM 1053 / JCM 10044 / NBRC 100330 / Delta H) (Methanobacterium thermoautotrophicum) protein is Translation initiation factor 6.